A 449-amino-acid chain; its full sequence is Tubulin alpha-2 chain (449 aa).

GTP is bound by residues Q11, E71, S140, G144, T145, T179, N206, and N228. Mg(2+) is bound at residue E71. Residue E254 is part of the active site.

It belongs to the tubulin family. In terms of assembly, dimer of alpha and beta chains. A typical microtubule is a hollow water-filled tube with an outer diameter of 25 nm and an inner diameter of 15 nM. Alpha-beta heterodimers associate head-to-tail to form protofilaments running lengthwise along the microtubule wall with the beta-tubulin subunit facing the microtubule plus end conferring a structural polarity. Microtubules usually have 13 protofilaments but different protofilament numbers can be found in some organisms and specialized cells. It depends on Mg(2+) as a cofactor.

It is found in the cytoplasm. Its subcellular location is the cytoskeleton. It catalyses the reaction GTP + H2O = GDP + phosphate + H(+). Functionally, tubulin is the major constituent of microtubules, a cylinder consisting of laterally associated linear protofilaments composed of alpha- and beta-tubulin heterodimers. Microtubules grow by the addition of GTP-tubulin dimers to the microtubule end, where a stabilizing cap forms. Below the cap, tubulin dimers are in GDP-bound state, owing to GTPase activity of alpha-tubulin. This Schizosaccharomyces pombe (strain 972 / ATCC 24843) (Fission yeast) protein is Tubulin alpha-2 chain (tub1).